The primary structure comprises 327 residues: D-alanine--D-alanine ligase (327 aa).

In terms of domain architecture, ATP-grasp spans 113 to 312 (KRLWMTYGLA…YEDFVMQVVA (200 aa)). ATP is bound at residue 139–194 (AADLGLPLIVKPAREGSSIGLTKVTAADQMRAAFEKAAALDNDVIAETFIDGAELT). Mg(2+)-binding residues include D266, E279, and N281.

It belongs to the D-alanine--D-alanine ligase family. Requires Mg(2+) as cofactor. Mn(2+) is required as a cofactor.

It localises to the cytoplasm. It carries out the reaction 2 D-alanine + ATP = D-alanyl-D-alanine + ADP + phosphate + H(+). The protein operates within cell wall biogenesis; peptidoglycan biosynthesis. Its function is as follows. Cell wall formation. The protein is D-alanine--D-alanine ligase of Cupriavidus necator (strain ATCC 17699 / DSM 428 / KCTC 22496 / NCIMB 10442 / H16 / Stanier 337) (Ralstonia eutropha).